The sequence spans 362 residues: Chorismate synthase (362 aa).

Arginine 47 is an NADP(+) binding site. FMN contacts are provided by residues 124–126 (RSS), glycine 286, 301–305 (KPTAT), and arginine 327.

The protein belongs to the chorismate synthase family. As to quaternary structure, homotetramer. FMNH2 is required as a cofactor.

It carries out the reaction 5-O-(1-carboxyvinyl)-3-phosphoshikimate = chorismate + phosphate. It functions in the pathway metabolic intermediate biosynthesis; chorismate biosynthesis; chorismate from D-erythrose 4-phosphate and phosphoenolpyruvate: step 7/7. Its function is as follows. Catalyzes the anti-1,4-elimination of the C-3 phosphate and the C-6 proR hydrogen from 5-enolpyruvylshikimate-3-phosphate (EPSP) to yield chorismate, which is the branch point compound that serves as the starting substrate for the three terminal pathways of aromatic amino acid biosynthesis. This reaction introduces a second double bond into the aromatic ring system. The sequence is that of Chorismate synthase from Synechococcus elongatus (strain ATCC 33912 / PCC 7942 / FACHB-805) (Anacystis nidulans R2).